A 104-amino-acid polypeptide reads, in one-letter code: Ribonucleotide reductase inhibitor protein SML1 (104 aa).

N-acetylmethionine is present on methionine 1. The disordered stretch occupies residues 43–62 (PMLSTQNSMGSSASASASSL). Serine 56, serine 58, and serine 60 each carry phosphoserine; by DUN1.

In terms of assembly, homodimer; disulfide-linked. Interacts with RNR1. Phosphorylated by DUN1, a downstream effector of the Mec1/Rad53 checkpoint pathway, in response to DNA damage. This promotes ubiquitination of SML1 and targets it for degradation by the 26S proteasome.

The protein localises to the nucleus. It localises to the cytoplasm. Strong inhibitor of ribonucleotide reductase (RNR1) and is involved in regulating dNTP production. The sequence is that of Ribonucleotide reductase inhibitor protein SML1 (SML1) from Saccharomyces cerevisiae (strain ATCC 204508 / S288c) (Baker's yeast).